The chain runs to 447 residues: Serine/threonine-protein phosphatase 2A 55 kDa regulatory subunit B gamma isoform (447 aa).

7 WD repeats span residues 22–61, 87–128, 171–209, 220–260, 279–317, 334–375, and 410–446; these read TEADVISTVEFNHTGELLATGDKGGRVVIFQREPESKNAP, EIEE…KRPE, GHTYHINSISVNSDCETYMSADDLRINLWHLAITDRSFN, DLTE…LCDK, EIISSVSDVKFSHSGRYMLTRDYLTVKVWDLNMEARPIE, ESDC…DVTL, and DFTKKILHTAWHPAENIIAIAATNNLYIFQDKVNSDM.

This sequence belongs to the phosphatase 2A regulatory subunit B family. As to quaternary structure, PP2A consists of a common heterodimeric core enzyme, composed of a 36 kDa catalytic subunit (subunit C) and a 65 kDa constant regulatory subunit (PR65 or subunit A), that associates with a variety of regulatory subunits. Proteins that associate with the core dimer include three families of regulatory subunits B (the R2/B/PR55/B55, R3/B''/PR72/PR130/PR59 and R5/B'/B56 families), the 48 kDa variable regulatory subunit, viral proteins, and cell signaling molecules. Interacts with IER5.

The B regulatory subunit might modulate substrate selectivity and catalytic activity, and might also direct the localization of the catalytic enzyme to a particular subcellular compartment. This Mus musculus (Mouse) protein is Serine/threonine-protein phosphatase 2A 55 kDa regulatory subunit B gamma isoform (Ppp2r2c).